The primary structure comprises 161 residues: Ribosome maturation factor RimP (161 aa).

It belongs to the RimP family.

The protein resides in the cytoplasm. Its function is as follows. Required for maturation of 30S ribosomal subunits. This is Ribosome maturation factor RimP from Rickettsia typhi (strain ATCC VR-144 / Wilmington).